Consider the following 110-residue polypeptide: Insulin (110 aa).

The signal sequence occupies residues Met1–Ala24. Intrachain disulfides connect Cys31-Cys96, Cys43-Cys109, and Cys95-Cys100. A propeptide spans Glu57 to Gln87 (c peptide).

The protein belongs to the insulin family. In terms of assembly, heterodimer of a B chain and an A chain linked by two disulfide bonds.

Its subcellular location is the secreted. Its function is as follows. Insulin decreases blood glucose concentration. It increases cell permeability to monosaccharides, amino acids and fatty acids. It accelerates glycolysis, the pentose phosphate cycle, and glycogen synthesis in liver. In Chlorocebus aethiops (Green monkey), this protein is Insulin (INS).